Consider the following 233-residue polypeptide: METSASSSQPQDNSQVHRETEDVDYGETDFHKQDGKAGLFSQEQYERNKSSSSSSSSSSSSSSSSSSSSSESNDEDQQPRATGKHRRSLGAGYPHGNGSPGPGHGEPDVLKDELQLYGDAPGEVVPSGESGLRRRGSDPASGEVEASQLRRLNIKKDDEFFHFVLLCFAIGALLVCYHYYADWFMSLGVGLLTFASLETVGIYFGLVYRIHSVLQGFIPLFQKFRLTGFRKTD.

Position 1 is an N-acetylmethionine (Met1). Positions 1–14 (METSASSSQPQDNS) are enriched in polar residues. The interval 1-143 (METSASSSQP…RRGSDPASGE (143 aa)) is disordered. A compositionally biased stretch (low complexity) spans 50 to 70 (SSSSSSSSSSSSSSSSSSSSS). The span at 93 to 104 (YPHGNGSPGPGH) shows a compositional bias: gly residues. Positions 105 to 114 (GEPDVLKDEL) are enriched in basic and acidic residues. A Phosphoserine modification is found at Ser137. The next 2 membrane-spanning stretches (helical) occupy residues 160–180 (FFHF…YHYY) and 187–207 (LGVG…FGLV).

Its subcellular location is the membrane. This chain is Transmembrane protein 40 (TMEM40), found in Homo sapiens (Human).